Reading from the N-terminus, the 146-residue chain is Large ribosomal subunit protein uL15 (146 aa).

A disordered region spans residues M1–H58. Gly residues-rich tracts occupy residues G22 to A31 and S42 to G52.

The protein belongs to the universal ribosomal protein uL15 family. In terms of assembly, part of the 50S ribosomal subunit.

Binds to the 23S rRNA. The sequence is that of Large ribosomal subunit protein uL15 from Desulfatibacillum aliphaticivorans.